The sequence spans 188 residues: Abscisic acid receptor PYL8 (188 aa).

The START-like stretch occupies residues 25 to 176; that stretch reads HELVDNQCSS…NLKSLADISE (152 aa). A disulfide bond links cysteine 32 and cysteine 157. Position 61 (lysine 61) interacts with abscisate. Threonine 77 bears the Phosphothreonine; by CARK1 mark. Positions 85–89 match the Gate loop motif; it reads SGLPA. Abscisate is bound by residues 89–94, 116–122, and glutamate 141; these read ATRSTE and RLKNYSS. The Latch loop signature appears at 115-117; the sequence is HRL.

This sequence belongs to the PYR/PYL/RCAR abscisic acid intracellular receptor family. In terms of assembly, monomer. Homodimer. Binds ABA on one subunit only. interacts with ABI1 and HAB1, and possibly with other PP2Cs. Binds to CARs protein in an ABA-independent manner, both at the plasma membrane and in the nucleus. Interacts directly with CAR1 and CAR4. Interacts with MYB44, MYB73 and MYB77 in an ABA-independent manner. Interacts with DDA1. Interacts with CARK1 in the cytosol. Binds to ABI1 when phosphorylated by CARK1. Interacts with AIP1 in the nucleus. In terms of processing, phosphorylated by CARK1 especially in response to abscisic acid (ABA); this phosphorylation promotes its stability and inhibitory ability to ABI1. Ubiquitinated in DDA1- and CDD complex-dependent manner. Ubiquitination leads to its subsequent proteasomal degradation.

It is found in the cytoplasm. The protein resides in the cytosol. It localises to the nucleus. Its subcellular location is the cell membrane. Its function is as follows. Receptor for abscisic acid (ABA) required for ABA-mediated responses such as stomatal closure and germination inhibition. Inhibits the activity of group-A protein phosphatases type 2C (PP2Cs) in an ABA-independent manner but more efficiently when activated by ABA. Confers enhanced sensitivity to ABA. Can be activated by both (-)-ABA and (+)-ABA. Mediates crosstalk between ABA and auxin signaling to regulate lateral root growth. Required for lateral root growth suppression by ABA. In response to auxin, promotes lateral root growth by enhancing MYB77-dependent transcription of the auxin-responsive gene IAA19. Enhances the abilities of MYB44 and MYB73 to activate IAA19 gene. The protein is Abscisic acid receptor PYL8 of Arabidopsis thaliana (Mouse-ear cress).